A 480-amino-acid polypeptide reads, in one-letter code: Probable glycosyltransferase 2 (480 aa).

Gly residues predominate over residues methionine 1–leucine 21. A disordered region spans residues methionine 1–lysine 45. At methionine 1–threonine 49 the chain is on the cytoplasmic side. Residues phenylalanine 50–glycine 72 traverse the membrane as a helical; Signal-anchor for type II membrane protein segment. Residues leucine 73–serine 480 lie on the Lumenal side of the membrane. Residues asparagine 74, asparagine 124, asparagine 129, and asparagine 458 are each glycosylated (N-linked (GlcNAc...) asparagine).

This sequence belongs to the glycosyltransferase 34 family.

It is found in the golgi apparatus membrane. Functionally, probable glycosyltransferase that may be involved in the biosynthesis of xyloglucan. The sequence is that of Probable glycosyltransferase 2 from Oryza sativa subsp. indica (Rice).